The primary structure comprises 255 residues: MRVVGLISGGKDSCFNMLQCVSAGHSIVALANLRPADHAASDELDSYMYQTVGHQAVDLIAEAMGLPLYRRTIEGSSVHIDREYSPTDGDEVEDLYQLLKHVKEEMHVDGVSVGAILSDYQRVRVENVCARLQLQPLAYLWRRDQAALLSEMISSGLHAILIKVAAFGLHPDKHLGKSLAEMELYLHELSEKYGVHICGEGGEYETFTLDCPLFKKKIIIDATETVIHSDDAFAPVGFLRFTKMHTEDKTEVRTL.

Belongs to the Diphthine--ammonia ligase family.

The catalysed reaction is diphthine-[translation elongation factor 2] + NH4(+) + ATP = diphthamide-[translation elongation factor 2] + AMP + diphosphate + H(+). It participates in protein modification; peptidyl-diphthamide biosynthesis. Amidase that catalyzes the last step of diphthamide biosynthesis using ammonium and ATP. Diphthamide biosynthesis consists in the conversion of an L-histidine residue in the translation elongation factor eEF-2 (EEF2) to diphthamide. In Danio rerio (Zebrafish), this protein is Diphthine--ammonia ligase (dph6).